The primary structure comprises 426 residues: Histidine--tRNA ligase (426 aa).

Belongs to the class-II aminoacyl-tRNA synthetase family.

Its subcellular location is the cytoplasm. It catalyses the reaction tRNA(His) + L-histidine + ATP = L-histidyl-tRNA(His) + AMP + diphosphate + H(+). This is Histidine--tRNA ligase from Saccharolobus islandicus (strain Y.N.15.51 / Yellowstone #2) (Sulfolobus islandicus).